The primary structure comprises 145 residues: Transcription antitermination protein NusB (145 aa).

It belongs to the NusB family.

Involved in transcription antitermination. Required for transcription of ribosomal RNA (rRNA) genes. Binds specifically to the boxA antiterminator sequence of the ribosomal RNA (rrn) operons. The protein is Transcription antitermination protein NusB of Geotalea daltonii (strain DSM 22248 / JCM 15807 / FRC-32) (Geobacter daltonii).